A 306-amino-acid chain; its full sequence is MSIRILPQEEIQQAASSFHNPPLLYANPKNLYARRAKRLRQLAEHNPFGDYLEFVANIVEVQLDLLENQPIANRVGELTAYLEAHQGVKPLDVKTFKRSDEWQKLLLAFIDKFKPYASDTVLATLEWLEKASNSELEMLADHLLNECYEEVGADKAVFLWAVLSLYWVQLTQQLPRNTKAEYGEERHTCPVCNSAPIASVVHFGETQGLRYLHCSLCESEWNMVRAKCSNCEQTGKLDYWSLDSMDAAVKAESCGDCESYLKVMYQDKDPHVEPIADDLGTLFLDAEMEQKGLARSAINPFLFQVE.

The protein belongs to the FdhE family.

Its subcellular location is the cytoplasm. Necessary for formate dehydrogenase activity. The chain is Protein FdhE homolog from Glaesserella parasuis serovar 5 (strain SH0165) (Haemophilus parasuis).